A 1994-amino-acid polypeptide reads, in one-letter code: Protein-methionine sulfoxide oxidase mical3a (1994 aa).

Residues 2–498 are monooxygenase domain; that stretch reads GDGGVNAVGE…RHLLDTGETR (497 aa). FAD contacts are provided by residues Cys101, 101–129, Glu120, Arg122, Arg127, Asn129, and Asp402; that span reads CGLR…SRNN. One can recognise a Calponin-homology (CH) domain in the interval 521–627; it reads IVRSSKLLNW…YLSQFYEMFK (107 aa). The segment at 666 to 708 is disordered; the sequence is ISRKRNPKDKKEKELDGLGKRRKTSQAGQSEDEELQRANRDDR. Positions 674–684 are enriched in basic and acidic residues; the sequence is DKKEKELDGLG. An LIM zinc-binding domain is found at 772–834; sequence DVCFFCRKRV…KPHYCYRLSG (63 aa). Disordered stretches follow at residues 843–900, 917–1064, 1176–1263, 1281–1476, 1493–1555, and 1598–1747; these read PAAA…LKGT, EELE…AEAR, SQPV…ELKK, LGLT…REEV, VEDT…SPEA, and KVAW…LRLR. 2 stretches are compositionally biased toward acidic residues: residues 917 to 926 and 951 to 961; these read EELEEVPEET and SDMEEEDEDAE. The span at 975-987 shows a compositional bias: basic and acidic residues; the sequence is EAVELHAKLKGES. 2 stretches are compositionally biased toward acidic residues: residues 1001–1037 and 1046–1060; these read GEMD…DPEA and PGTE…SDAE. Residues 1200–1215 are compositionally biased toward polar residues; it reads PTGNPLSPICTQSQPC. Composition is skewed to basic and acidic residues over residues 1249–1263 and 1287–1297; these read RTNE…ELKK and ERSKTAVEKSI. Low complexity-rich tracts occupy residues 1299–1314 and 1358–1368; these read KTPT…YTPE and SSSSGLGLNGS. The span at 1369-1389 shows a compositional bias: polar residues; that stretch reads VTTSQTAASDSYNNSDSTMLT. Pro residues predominate over residues 1437–1458; that stretch reads PVSPPQPKQKPVTAPVPTPRTN. A compositionally biased stretch (basic and acidic residues) spans 1464–1476; it reads RVKEPNKPRREEV. Over residues 1616–1635 the composition is skewed to basic and acidic residues; that stretch reads AQKDSAVKALESKKQADTLP. A compositionally biased stretch (low complexity) spans 1649-1660; the sequence is SSVTSSESSTGG. The span at 1661-1679 shows a compositional bias: basic residues; sequence KSKKRSSLFSPRKNKKEKK. Residues 1680-1693 show a composition bias toward basic and acidic residues; sequence AKNERLSSTEETPP. Over residues 1718–1729 the composition is skewed to low complexity; that stretch reads CPSTPSSSTTGD. Over residues 1730–1746 the composition is skewed to basic and acidic residues; sequence SGKKKDSPLDRSSDLRL. 2 coiled-coil regions span residues 1796–1855 and 1894–1960; these read EEEL…KALR and QEKN…EQRD. Residues 1816-1982 enclose the bMERB domain; that stretch reads KQEELKRLHR…EKEEDKDLEA (167 aa).

The protein belongs to the Mical family. The cofactor is FAD.

The protein resides in the cytoplasm. Its subcellular location is the cytoskeleton. It is found in the nucleus. It carries out the reaction L-methionyl-[F-actin] + NADPH + O2 + H(+) = L-methionyl-(R)-S-oxide-[F-actin] + NADP(+) + H2O. Monooxygenase that promotes depolymerization of F-actin by mediating oxidation of specific methionine residues on actin. Acts by modifying actin subunits through the addition of oxygen to form methionine-sulfoxide, leading to promote actin filament severing and prevent repolymerization. Involved in exocytic vesicles tethering and fusion: the monooxygenase activity is required for this process. The sequence is that of Protein-methionine sulfoxide oxidase mical3a (mical3a) from Danio rerio (Zebrafish).